Consider the following 88-residue polypeptide: Small ribosomal subunit protein uS15 (88 aa).

It belongs to the universal ribosomal protein uS15 family. In terms of assembly, part of the 30S ribosomal subunit. Forms a bridge to the 50S subunit in the 70S ribosome, contacting the 23S rRNA.

One of the primary rRNA binding proteins, it binds directly to 16S rRNA where it helps nucleate assembly of the platform of the 30S subunit by binding and bridging several RNA helices of the 16S rRNA. Functionally, forms an intersubunit bridge (bridge B4) with the 23S rRNA of the 50S subunit in the ribosome. The protein is Small ribosomal subunit protein uS15 of Mycoplasmopsis synoviae (strain 53) (Mycoplasma synoviae).